Consider the following 139-residue polypeptide: Invertebrate-type lysozyme 2 (139 aa).

Residues 1-18 (MFVKAILLLSIAVAYASA) form the signal peptide. In terms of domain architecture, I-type lysozyme spans 19–138 (DCLHCICMRE…WKGVHSCCGC (120 aa)). 7 disulfides stabilise this stretch: C20–C106, C23–C138, C25–C31, C36–C45, C58–C86, C76–C82, and C98–C120. Catalysis depends on E28, which acts as the Proton donor. Catalysis depends on D39, which acts as the Nucleophile. Residue 51–57 (KIPYYED) participates in substrate binding. Residues Y90 and 113–115 (HNG) each bind substrate.

It belongs to the glycosyl hydrolase 22 family. Type-I lysozyme subfamily. Expressed in pharyngeal muscle cell pm3, nerve ring and intestine.

It catalyses the reaction Hydrolysis of (1-&gt;4)-beta-linkages between N-acetylmuramic acid and N-acetyl-D-glucosamine residues in a peptidoglycan and between N-acetyl-D-glucosamine residues in chitodextrins.. In terms of biological role, has bacteriolytic activity against Gram-positive bacteria. May play a role in resistance to Gram-positive bacterium S.aureus infection. The protein is Invertebrate-type lysozyme 2 of Caenorhabditis elegans.